Consider the following 421-residue polypeptide: Putative transporter AmpG 3 (421 aa).

12 consecutive transmembrane segments (helical) span residues 6–26 (YLIG…LIFF), 41–61 (IIGA…WSPF), 80–100 (WALV…KRSP), 104–124 (LCIT…QDIV), 139–159 (LSIV…LGSV), 166–186 (IIFG…VGPI), 230–250 (LLLI…PMAM), 274–294 (LLIM…IGIF), 297–317 (VLIG…LATI), 324–344 (FIIT…IISI), 360–380 (AISA…GGIC), and 388–408 (VFFL…YTIY).

It belongs to the major facilitator superfamily.

The protein localises to the cell inner membrane. In Rickettsia prowazekii (strain Madrid E), this protein is Putative transporter AmpG 3 (ampG3).